A 317-amino-acid chain; its full sequence is MWLYLVALVGLWTLLRFFRVRQVVSHLQDKYVFITGCDSGFGTLLARQLDRRGMRVLAACLTEKGAEELRNKTSDRLETVILDVTKTESIVTATQWVKEHVGNRGLWGLVNNAGISTPSGPNEWMKKQDFAHVLDVNLLGMIEVTLSMLPLVRKARGRVVNVSSVMGRVSLFGGGYCISKYGVEAFSDSLRRELSYFGVKVAIIEPGFFLTGVTSSARLCSNTQMLWDQTSSEIREIYGEKYLASYLKRLNKLDKRCNKDLSGVTDCMEHALTACHPRTRYSAGWDAKLFYLPLSYLPTFLVDALLYWTSLKPEKAL.

Residue 33-57 (FITGCDSGFGTLLARQLDRRGMRVL) participates in NAD(+) binding. The active-site Proton acceptor is Y176. Residues 289-309 (LFYLPLSYLPTFLVDALLYWT) traverse the membrane as a helical segment.

Belongs to the short-chain dehydrogenases/reductases (SDR) family. In terms of assembly, homodimer. In terms of processing, not glycosylated.

It localises to the endoplasmic reticulum membrane. The protein resides in the microsome membrane. It catalyses the reaction all-trans-retinol--[retinol-binding protein] + NAD(+) = all-trans-retinal--[retinol-binding protein] + NADH + H(+). It carries out the reaction 9-cis-retinol + NAD(+) = 9-cis-retinal + NADH + H(+). The catalysed reaction is 11-cis-retinol + NAD(+) = 11-cis-retinal + NADH + H(+). The enzyme catalyses 13-cis-retinol + NAD(+) = 13-cis-retinal + NADH + H(+). It catalyses the reaction androsterone + NAD(+) = 5alpha-androstan-3,17-dione + NADH + H(+). It carries out the reaction 5alpha-androstane-3alpha,17beta-diol + NAD(+) = 17beta-hydroxy-5alpha-androstan-3-one + NADH + H(+). It functions in the pathway cofactor metabolism; retinol metabolism. Functionally, oxidoreductase with a preference for NAD. Oxidizes all-trans-retinol, 9-cis-retinol, 11-cis-retinol and 13-cis-retinol to the corresponding aldehydes. Has higher activity towards CRBP-bound retinol than with free retinol. Oxidizes 3-alpha-hydroxysteroids. Oxidizes androstanediol and androsterone to dihydrotestosterone and androstanedione. Can also catalyze the reverse reaction. This is Retinol dehydrogenase 16 from Mus musculus (Mouse).